The primary structure comprises 483 residues: Probable cobyric acid synthase (483 aa).

In terms of domain architecture, GATase cobBQ-type spans 247–433; that stretch reads ELHIQIIKLP…LHGIFHNFAF (187 aa). The Nucleophile role is filled by Cys325. His425 is a catalytic residue.

The protein belongs to the CobB/CobQ family. CobQ subfamily.

It functions in the pathway cofactor biosynthesis; adenosylcobalamin biosynthesis. Catalyzes amidations at positions B, D, E, and G on adenosylcobyrinic A,C-diamide. NH(2) groups are provided by glutamine, and one molecule of ATP is hydrogenolyzed for each amidation. This is Probable cobyric acid synthase from Thermococcus gammatolerans (strain DSM 15229 / JCM 11827 / EJ3).